The primary structure comprises 290 residues: Arylamine N-acetyltransferase 2 (290 aa).

Residue Cys-68 is the Acyl-thioester intermediate of the active site. 2 residues coordinate CoA: Ser-103 and Gly-104. Residue 106–107 coordinates substrate; that stretch reads IH. Residues His-107 and Asp-122 contribute to the active site. Tyr-208 lines the CoA pocket.

Belongs to the arylamine N-acetyltransferase family.

The protein resides in the cytoplasm. The catalysed reaction is an arylamine + acetyl-CoA = an N-acetylarylamine + CoA. It carries out the reaction an N-hydroxyarylamine + acetyl-CoA = an N-acetoxyarylamine + CoA. Functionally, catalyzes the N- or O-acetylation of various arylamine and heterocyclic amine substrates, and participates in the detoxification of a plethora of hydrazine and arylamine drugs. This is Arylamine N-acetyltransferase 2 (Nat2) from Mus musculus (Mouse).